The primary structure comprises 126 residues: Precursor of CEP2 (126 aa).

Positions 1–19 are cleaved as a signal peptide; the sequence is MKLFIITVVTILTISRVFD. The propeptide occupies 20 to 80; the sequence is KTPATTEARK…ENNLKNRFIN (61 aa). Hydroxyproline occurs at positions 84 and 87. Residues 96 to 105 constitute a propeptide that is removed on maturation; it reads PRVLNNKFTN. Residues P109, P112, and P116 each carry the hydroxyproline modification. Residues 121–126 constitute a propeptide that is removed on maturation; it reads PGVVNV.

This sequence belongs to the C-terminally encoded plant signaling peptide (CEP) family. As to quaternary structure, interacts with CEP receptors (e.g. CEPR1 and CEPR2). The mature small signaling peptide is generated by proteolytic processing of the longer precursor. Mostly expressed in roots. Present in cotyledons, shoot apical meristem (SAM), leaves, inflorescence stems and flowers.

The protein localises to the secreted. It is found in the extracellular space. It localises to the apoplast. Extracellular signaling peptide that represses primary root growth rate. Negatively regulates the number of leaves and flowering, and modulates leaf morphology. Regulates systemic nitrogen (N)-demand signaling. Mediates up-regulation of genes involved in N uptake and assimilation pathways. The polypeptide is Precursor of CEP2 (Arabidopsis thaliana (Mouse-ear cress)).